Consider the following 94-residue polypeptide: MFTINAEVRKEQGKGASRRLRAANKFPAIIYGGKEAPLAIELDHDKVMNMQAKAEFYSEVLAIVVDGKEIKVKAQDVQRHPYKPKLQHIDFVRA.

Belongs to the bacterial ribosomal protein bL25 family. In terms of assembly, part of the 50S ribosomal subunit; part of the 5S rRNA/L5/L18/L25 subcomplex. Contacts the 5S rRNA. Binds to the 5S rRNA independently of L5 and L18.

Functionally, this is one of the proteins that binds to the 5S RNA in the ribosome where it forms part of the central protuberance. This Shigella boydii serotype 4 (strain Sb227) protein is Large ribosomal subunit protein bL25.